The chain runs to 206 residues: Protein GrpE (206 aa).

Residues 1–18 (MNNEDKKLQDEQLQKETV) are compositionally biased toward basic and acidic residues. A disordered region spans residues 1–21 (MNNEDKKLQDEQLQKETVEAA).

It belongs to the GrpE family. As to quaternary structure, homodimer.

The protein localises to the cytoplasm. Participates actively in the response to hyperosmotic and heat shock by preventing the aggregation of stress-denatured proteins, in association with DnaK and GrpE. It is the nucleotide exchange factor for DnaK and may function as a thermosensor. Unfolded proteins bind initially to DnaJ; upon interaction with the DnaJ-bound protein, DnaK hydrolyzes its bound ATP, resulting in the formation of a stable complex. GrpE releases ADP from DnaK; ATP binding to DnaK triggers the release of the substrate protein, thus completing the reaction cycle. Several rounds of ATP-dependent interactions between DnaJ, DnaK and GrpE are required for fully efficient folding. This chain is Protein GrpE, found in Photobacterium profundum (strain SS9).